We begin with the raw amino-acid sequence, 388 residues long: S-adenosylmethionine synthase (388 aa).

An ATP-binding site is contributed by H16. D18 is a Mg(2+) binding site. E44 lines the K(+) pocket. Residues E57 and Q100 each coordinate L-methionine. The tract at residues 100 to 110 (QSPDIAQGVDK) is flexible loop. Residues 167 to 169 (DAK), 233 to 234 (RF), D242, 248 to 249 (RK), A265, and K269 contribute to the ATP site. D242 contacts L-methionine. K273 is an L-methionine binding site.

It belongs to the AdoMet synthase family. Homotetramer; dimer of dimers. Mg(2+) serves as cofactor. K(+) is required as a cofactor.

It localises to the cytoplasm. It catalyses the reaction L-methionine + ATP + H2O = S-adenosyl-L-methionine + phosphate + diphosphate. Its pathway is amino-acid biosynthesis; S-adenosyl-L-methionine biosynthesis; S-adenosyl-L-methionine from L-methionine: step 1/1. Its function is as follows. Catalyzes the formation of S-adenosylmethionine (AdoMet) from methionine and ATP. The overall synthetic reaction is composed of two sequential steps, AdoMet formation and the subsequent tripolyphosphate hydrolysis which occurs prior to release of AdoMet from the enzyme. The chain is S-adenosylmethionine synthase from Polynucleobacter necessarius subsp. necessarius (strain STIR1).